The following is a 1176-amino-acid chain: Nitrite reductase [NAD(P)H] (1176 aa).

Residues 1–23 (MANTSLDMASSTSPSPSPESTTT) form a disordered region. Residues 10–23 (SSTSPSPSPESTTT) are compositionally biased toward low complexity. 26 to 60 (KRIVVVGLGMVGIAFIEKLIKLDTQRQYEIVVIGE) is a binding site for FAD. Position 183–215 (183–215 (STGVVVGGGLLGLEAAKALMDLQVFGRVVVIER)) interacts with NAD(+). [2Fe-2S] cluster is bound by residues C496, C498, C531, and C534. 4 residues coordinate [4Fe-4S] cluster: C717, C723, C757, and C761. Siroheme is bound at residue C761. The 153-residue stretch at 942-1094 (SYFQGADDLP…VEERDDGMVY (153 aa)) folds into the Rieske; atypical domain. Positions 981 and 983 each coordinate [2Fe-2S] cluster. Low complexity-rich tracts occupy residues 998–1008 (PSPSSCSSSAL) and 1030–1049 (PTSS…TNPS). Positions 998–1051 (PSPSSCSSSALPPSPPSTPPRSSSPVTSPPQSPTSSATPATTASSSCTTNPSGP) are disordered. Positions 1058 and 1061 each coordinate [2Fe-2S] cluster. Positions 1124–1139 (LRELDELNKSKGVEGK) are enriched in basic and acidic residues. Positions 1124 to 1157 (LRELDELNKSKGVEGKKGRRGRKPGASEAGKEVG) are disordered.

This sequence belongs to the nitrite and sulfite reductase 4Fe-4S domain family. As to quaternary structure, homodimer. It depends on siroheme as a cofactor. Requires [4Fe-4S] cluster as cofactor. The cofactor is FAD. [2Fe-2S] cluster is required as a cofactor.

It carries out the reaction NH4(+) + 3 NADP(+) + 2 H2O = nitrite + 3 NADPH + 5 H(+). The enzyme catalyses NH4(+) + 3 NAD(+) + 2 H2O = nitrite + 3 NADH + 5 H(+). It functions in the pathway nitrogen metabolism; nitrate reduction (assimilation). This is Nitrite reductase [NAD(P)H] (nit-6) from Neurospora crassa (strain ATCC 24698 / 74-OR23-1A / CBS 708.71 / DSM 1257 / FGSC 987).